Here is a 184-residue protein sequence, read N- to C-terminus: Large ribosomal subunit protein uL6 (184 aa).

Belongs to the universal ribosomal protein uL6 family. As to quaternary structure, part of the 50S ribosomal subunit.

This protein binds to the 23S rRNA, and is important in its secondary structure. It is located near the subunit interface in the base of the L7/L12 stalk, and near the tRNA binding site of the peptidyltransferase center. The sequence is that of Large ribosomal subunit protein uL6 from Thermococcus kodakarensis (strain ATCC BAA-918 / JCM 12380 / KOD1) (Pyrococcus kodakaraensis (strain KOD1)).